Here is a 219-residue protein sequence, read N- to C-terminus: MSLIDPTQTSISDLRRDYRQQALLETEVNANPILQFQSWFEQAVQAELPEPNAMTLATVSADSQPSARMVLLKGFDQQGFIFYTNYLSRKGQDLAQRPWAALVFWWAELERQVRIEGKVVKVSDSETKAYFESRPRGSQLGAWASDQSQVIGDRDILDQRLQALEQKYQNQPIPRPPHWGGYRVTPHLIEFWQGRTSRLHDRLCYRYSDQEWILERLSP.

Substrate-binding positions include 15-18 and lysine 73; that span reads RRDY. FMN is bound by residues 68–73, 83–84, arginine 89, lysine 90, and glutamine 112; these read RMVLLK and YT. Residues tyrosine 130, arginine 134, and serine 138 each contribute to the substrate site. FMN-binding positions include 147 to 148 and tryptophan 192; that span reads QS. Residue 198-200 participates in substrate binding; it reads RLH. Arginine 202 serves as a coordination point for FMN.

Belongs to the pyridoxamine 5'-phosphate oxidase family. In terms of assembly, homodimer. FMN serves as cofactor.

The enzyme catalyses pyridoxamine 5'-phosphate + O2 + H2O = pyridoxal 5'-phosphate + H2O2 + NH4(+). The catalysed reaction is pyridoxine 5'-phosphate + O2 = pyridoxal 5'-phosphate + H2O2. It participates in cofactor metabolism; pyridoxal 5'-phosphate salvage; pyridoxal 5'-phosphate from pyridoxamine 5'-phosphate: step 1/1. Its pathway is cofactor metabolism; pyridoxal 5'-phosphate salvage; pyridoxal 5'-phosphate from pyridoxine 5'-phosphate: step 1/1. In terms of biological role, catalyzes the oxidation of either pyridoxine 5'-phosphate (PNP) or pyridoxamine 5'-phosphate (PMP) into pyridoxal 5'-phosphate (PLP). The polypeptide is Pyridoxine/pyridoxamine 5'-phosphate oxidase (Acaryochloris marina (strain MBIC 11017)).